Consider the following 603-residue polypeptide: Glutamyl-tRNA(Gln) amidotransferase subunit B, mitochondrial (603 aa).

Residues 1–32 (MIRHRLRLALSAAPVTATGRRTRSKTAPRRSL) constitute a mitochondrion transit peptide. Positions 12–59 (AAPVTATGRRTRSKTAPRRSLSTQQTQSSASSSSNNLDGDGRAFVPLR) are disordered. The span at 31-48 (SLSTQQTQSSASSSSNNL) shows a compositional bias: low complexity.

It belongs to the GatB/GatE family. GatB subfamily. Subunit of the heterotrimeric GatCAB amidotransferase (AdT) complex, composed of A, B and C subunits.

The protein localises to the mitochondrion. The enzyme catalyses L-glutamyl-tRNA(Gln) + L-glutamine + ATP + H2O = L-glutaminyl-tRNA(Gln) + L-glutamate + ADP + phosphate + H(+). In terms of biological role, allows the formation of correctly charged Gln-tRNA(Gln) through the transamidation of misacylated Glu-tRNA(Gln) in the mitochondria. The reaction takes place in the presence of glutamine and ATP through an activated gamma-phospho-Glu-tRNA(Gln). This Arthroderma otae (strain ATCC MYA-4605 / CBS 113480) (Microsporum canis) protein is Glutamyl-tRNA(Gln) amidotransferase subunit B, mitochondrial.